Reading from the N-terminus, the 115-residue chain is Envelope glycoprotein N (115 aa).

A signal peptide spans 1–27; that stretch reads MWLLRPAGSNFIVALIVLACAGPLTCS. The Virion surface segment spans residues 28–77; sequence AQLDAGILNPWGSAGHNDAVMPGMFANSESDERFYSPHCSSRGLPLVNES. A helical membrane pass occupies residues 78–98; the sequence is MASVIFFLSLAMVCVAIVAIL. Topologically, residues 99–115 are intravirion; sequence YNCCFNSFKNSVINSRW.

The protein belongs to the herpesviridae glycoprotein N family. Interacts (via N-terminus) with gM (via N-terminus). The gM-gN heterodimer forms the gCII complex.

It localises to the virion membrane. The protein resides in the host membrane. It is found in the host Golgi apparatus. The protein localises to the host trans-Golgi network. In terms of biological role, envelope glycoprotein necessary for proper maturation of gM and modulation of its membrane fusion activity. Also plays a critical role in virion morphogenesis. This chain is Envelope glycoprotein N, found in Psittacid herpesvirus 1 (isolate Amazon parrot/-/97-0001/1997) (PsHV-1).